Consider the following 593-residue polypeptide: Glutamyl-tRNA(Gln) amidotransferase subunit B, mitochondrial (593 aa).

The N-terminal 49 residues, 1-49 (MLRPWLRQSTRAARSLPCCQCPRPYSSRLPTLTSPSSSVRRLQTSASES), are a transit peptide targeting the mitochondrion. The span at 27–42 (SRLPTLTSPSSSVRRL) shows a compositional bias: low complexity. A disordered region spans residues 27–80 (SRLPTLTSPSSSVRRLQTSASESQDRVPLRKQLKQNAKALKAEKRQRRESEEAS). Over residues 66 to 80 (LKAEKRQRRESEEAS) the composition is skewed to basic and acidic residues.

It belongs to the GatB/GatE family. GatB subfamily. Subunit of the heterotrimeric GatCAB amidotransferase (AdT) complex, composed of A, B and C subunits.

The protein resides in the mitochondrion. The catalysed reaction is L-glutamyl-tRNA(Gln) + L-glutamine + ATP + H2O = L-glutaminyl-tRNA(Gln) + L-glutamate + ADP + phosphate + H(+). Functionally, allows the formation of correctly charged Gln-tRNA(Gln) through the transamidation of misacylated Glu-tRNA(Gln) in the mitochondria. The reaction takes place in the presence of glutamine and ATP through an activated gamma-phospho-Glu-tRNA(Gln). The sequence is that of Glutamyl-tRNA(Gln) amidotransferase subunit B, mitochondrial from Aspergillus oryzae (strain ATCC 42149 / RIB 40) (Yellow koji mold).